Here is a 328-residue protein sequence, read N- to C-terminus: Phosphatidylglycerol--prolipoprotein diacylglyceryl transferase (328 aa).

Transmembrane regions (helical) follow at residues 15-35, 57-77, and 106-126; these read VIQG…ILIS, IFMF…STLV, and GMAI…TINT. R156 serves as a coordination point for a 1,2-diacyl-sn-glycero-3-phospho-(1'-sn-glycerol). A run of 2 helical transmembrane segments spans residues 242 to 262 and 289 to 309; these read GFIF…IEYL and ISMG…WIIV.

Belongs to the Lgt family.

The protein localises to the cell inner membrane. The enzyme catalyses L-cysteinyl-[prolipoprotein] + a 1,2-diacyl-sn-glycero-3-phospho-(1'-sn-glycerol) = an S-1,2-diacyl-sn-glyceryl-L-cysteinyl-[prolipoprotein] + sn-glycerol 1-phosphate + H(+). Its pathway is protein modification; lipoprotein biosynthesis (diacylglyceryl transfer). In terms of biological role, catalyzes the transfer of the diacylglyceryl group from phosphatidylglycerol to the sulfhydryl group of the N-terminal cysteine of a prolipoprotein, the first step in the formation of mature lipoproteins. The protein is Phosphatidylglycerol--prolipoprotein diacylglyceryl transferase of Borreliella burgdorferi (strain ZS7) (Borrelia burgdorferi).